A 235-amino-acid polypeptide reads, in one-letter code: Phosphoribosylaminoimidazole-succinocarboxamide synthase (235 aa).

It belongs to the SAICAR synthetase family.

The catalysed reaction is 5-amino-1-(5-phospho-D-ribosyl)imidazole-4-carboxylate + L-aspartate + ATP = (2S)-2-[5-amino-1-(5-phospho-beta-D-ribosyl)imidazole-4-carboxamido]succinate + ADP + phosphate + 2 H(+). It functions in the pathway purine metabolism; IMP biosynthesis via de novo pathway; 5-amino-1-(5-phospho-D-ribosyl)imidazole-4-carboxamide from 5-amino-1-(5-phospho-D-ribosyl)imidazole-4-carboxylate: step 1/2. In Chlorobaculum parvum (strain DSM 263 / NCIMB 8327) (Chlorobium vibrioforme subsp. thiosulfatophilum), this protein is Phosphoribosylaminoimidazole-succinocarboxamide synthase.